The chain runs to 208 residues: Imidazole glycerol phosphate synthase subunit HisH (208 aa).

The region spanning N2–L208 is the Glutamine amidotransferase type-1 domain. The active-site Nucleophile is C85. Residues H190 and E192 contribute to the active site.

As to quaternary structure, heterodimer of HisH and HisF.

It localises to the cytoplasm. The catalysed reaction is 5-[(5-phospho-1-deoxy-D-ribulos-1-ylimino)methylamino]-1-(5-phospho-beta-D-ribosyl)imidazole-4-carboxamide + L-glutamine = D-erythro-1-(imidazol-4-yl)glycerol 3-phosphate + 5-amino-1-(5-phospho-beta-D-ribosyl)imidazole-4-carboxamide + L-glutamate + H(+). The enzyme catalyses L-glutamine + H2O = L-glutamate + NH4(+). Its pathway is amino-acid biosynthesis; L-histidine biosynthesis; L-histidine from 5-phospho-alpha-D-ribose 1-diphosphate: step 5/9. IGPS catalyzes the conversion of PRFAR and glutamine to IGP, AICAR and glutamate. The HisH subunit catalyzes the hydrolysis of glutamine to glutamate and ammonia as part of the synthesis of IGP and AICAR. The resulting ammonia molecule is channeled to the active site of HisF. The polypeptide is Imidazole glycerol phosphate synthase subunit HisH (Pelagibacter ubique (strain HTCC1062)).